A 255-amino-acid chain; its full sequence is tRNA (guanine-N(1)-)-methyltransferase (255 aa).

S-adenosyl-L-methionine is bound by residues G117 and 137–142; that span reads LGDFVL.

This sequence belongs to the RNA methyltransferase TrmD family. As to quaternary structure, homodimer.

The protein localises to the cytoplasm. The catalysed reaction is guanosine(37) in tRNA + S-adenosyl-L-methionine = N(1)-methylguanosine(37) in tRNA + S-adenosyl-L-homocysteine + H(+). Specifically methylates guanosine-37 in various tRNAs. This Paracidovorax citrulli (strain AAC00-1) (Acidovorax citrulli) protein is tRNA (guanine-N(1)-)-methyltransferase.